The following is a 372-amino-acid chain: Carbamoyl phosphate synthase small chain (372 aa).

Positions 1–182 (MTLYCKRGYK…PKAPIVHLGN (182 aa)) are CPSase. The L-glutamine site is built by Ser-53, Gly-234, and Gly-236. The region spanning 186–372 (TIVVVDCGVK…KFKKMVSRNA (187 aa)) is the Glutamine amidotransferase type-1 domain. The Nucleophile role is filled by Cys-262. Residues Leu-263, Gln-266, Asn-304, Gly-306, and Tyr-307 each coordinate L-glutamine. Active-site residues include His-347 and Glu-349.

Belongs to the CarA family. Composed of two chains; the small (or glutamine) chain promotes the hydrolysis of glutamine to ammonia, which is used by the large (or ammonia) chain to synthesize carbamoyl phosphate. Tetramer of heterodimers (alpha,beta)4.

It carries out the reaction hydrogencarbonate + L-glutamine + 2 ATP + H2O = carbamoyl phosphate + L-glutamate + 2 ADP + phosphate + 2 H(+). It catalyses the reaction L-glutamine + H2O = L-glutamate + NH4(+). The protein operates within amino-acid biosynthesis; L-arginine biosynthesis; carbamoyl phosphate from bicarbonate: step 1/1. It functions in the pathway pyrimidine metabolism; UMP biosynthesis via de novo pathway; (S)-dihydroorotate from bicarbonate: step 1/3. Small subunit of the glutamine-dependent carbamoyl phosphate synthetase (CPSase). CPSase catalyzes the formation of carbamoyl phosphate from the ammonia moiety of glutamine, carbonate, and phosphate donated by ATP, constituting the first step of 2 biosynthetic pathways, one leading to arginine and/or urea and the other to pyrimidine nucleotides. The small subunit (glutamine amidotransferase) binds and cleaves glutamine to supply the large subunit with the substrate ammonia. This is Carbamoyl phosphate synthase small chain from Sulfurisphaera tokodaii (strain DSM 16993 / JCM 10545 / NBRC 100140 / 7) (Sulfolobus tokodaii).